Consider the following 498-residue polypeptide: Probable FAD-binding monooxygenase AlmA (498 aa).

The helical transmembrane segment at 4–24 (HIDILIVGAGISGIGIAAHLS) threads the bilayer. Residues S15, E36, D56, F62, and V104 each coordinate FAD. 54-56 (RSD) is a binding site for NADP(+). NADP(+) contacts are provided by residues 184 to 190 (SGATAIT), 208 to 209 (RS), and 292 to 293 (RL). V395 is an FAD binding site.

This sequence belongs to the FAD-binding monooxygenase family. It depends on FAD as a cofactor.

It localises to the cell membrane. The protein operates within hydrocarbon metabolism; alkane degradation. Functionally, is able to catalyze the degradation of n-alkanes with C chain lengths of 32 and 36. Probably allows Acinetobacter baylyi strain ADP1 to grow on the long-chain n-alkane dotriacontane (C32H66) as a sole carbon source. The protein is Probable FAD-binding monooxygenase AlmA of Acinetobacter baylyi (strain ATCC 33305 / BD413 / ADP1).